The following is an 875-amino-acid chain: MGRAGGGSGDGGEEPAALEAVRSFERWKKKYSRRTRRLRLQRKERERPEWQVEREGIGRLVQRYPQINANEIQRFSDFPLSKKTLKGLQEAQYRMVTEIQRQTIGLALQGKDVLGAAKTGSGKTLAFIVPALELLYRLQWTSADGLGVLIISPTRELAFQTFKVLRKVGKNHDFSAGLIIGGKDLKEESERIHHINMLICTPGRLLQHMDETSYFYASDLQMLILDEADRILDMGFADTMNAIIENLPKKRQTLLFSATQTKSVKDLARLSLKDPEYVWVHEKAKFSTPATLDQNYIVCELQHKINVLYSFLRSHLKKKSIVFFASCKEVQYLFRVFCKLQPGLPVLALHGKQQQMKRMEVYTCFVRKKAAVLFATDIAARGLDFPAVNWVIQFDCPEDANTYIHRVGRTARYKEGGEALLVLLPSEEKGMVEQLAQRKVPVNEIKINPEKITDIQKRMQAFLAQDQELKEKAQRCFVSYLRSVYLMKNKEVFDVFKLPLAEYALSLGLAMAPRVRFLQKVQKQLSVKETSERNPLKDTEQNKNTISSLNKEGMEECRINPSGKLSVNRSKEEENRKETEQYPPSSEGTEESGSECESKEASEEEEKEGALSSRVPYTNSMQFFEDDDDDDDTKDLDLLTVKRRDVFDLESKDSPALNASNSKMKKKTTKTQEAKKILKKKFKVNTRIVFTEDGELVQQWPPVQKSGLAKADEEDDASGINLDKVREILREEDKFDKEEYRKKIKEKHREKRLKEKAARREARNKNARAEGETVAVLAHSGSEDEFDPSTLPDPDKYKDSDEEQDTESEDSYRELEEKSGRKRRSHGGSIAAGEMPQKRKKAKFSQEEDPFLPLDTGLSLAEDEELVLHLLKSHS.

The Q motif signature appears at 73–101 (QRFSDFPLSKKTLKGLQEAQYRMVTEIQR). Residues 93–95 (YRM), Gln-100, and 117–124 (AKTGSGKT) each bind ATP. A Helicase ATP-binding domain is found at 104–278 (IGLALQGKDV…RLSLKDPEYV (175 aa)). Positions 226 to 229 (DEAD) match the DEAD box motif. One can recognise a Helicase C-terminal domain in the interval 291–453 (TLDQNYIVCE…EIKINPEKIT (163 aa)). 3 disordered regions span residues 528-633 (KETS…DDDT), 653-672 (DSPA…TKTQ), and 743-856 (KIKE…PLDT). Basic and acidic residues-rich tracts occupy residues 529-541 (ETSE…DTEQ) and 569-580 (RSKEEENRKETE). Residues 624–633 (FEDDDDDDDT) show a composition bias toward acidic residues. Residues 736-773 (DKEEYRKKIKEKHREKRLKEKAARREARNKNARAEGET) are a coiled coil. Over residues 752–771 (RLKEKAARREARNKNARAEG) the composition is skewed to basic and acidic residues. A compositionally biased stretch (acidic residues) spans 800-809 (SDEEQDTESE). Over residues 810–819 (DSYRELEEKS) the composition is skewed to basic and acidic residues.

The protein belongs to the DEAD box helicase family. DDX10/DBP4 subfamily.

It carries out the reaction ATP + H2O = ADP + phosphate + H(+). Putative ATP-dependent RNA helicase. The sequence is that of Probable ATP-dependent RNA helicase DDX10 (DDX10) from Gallus gallus (Chicken).